Consider the following 325-residue polypeptide: Glycerol-3-phosphate dehydrogenase [NAD(P)+] (325 aa).

Positions 14, 15, 35, and 109 each coordinate NADPH. Sn-glycerol 3-phosphate-binding residues include K109 and G137. Residue A141 coordinates NADPH. Sn-glycerol 3-phosphate-binding residues include K192, D247, S257, R258, and N259. The active-site Proton acceptor is K192. Residue R258 participates in NADPH binding. NADPH-binding residues include L282 and E284.

The protein belongs to the NAD-dependent glycerol-3-phosphate dehydrogenase family.

It is found in the cytoplasm. It carries out the reaction sn-glycerol 3-phosphate + NAD(+) = dihydroxyacetone phosphate + NADH + H(+). The enzyme catalyses sn-glycerol 3-phosphate + NADP(+) = dihydroxyacetone phosphate + NADPH + H(+). It functions in the pathway membrane lipid metabolism; glycerophospholipid metabolism. Catalyzes the reduction of the glycolytic intermediate dihydroxyacetone phosphate (DHAP) to sn-glycerol 3-phosphate (G3P), the key precursor for phospholipid synthesis. The protein is Glycerol-3-phosphate dehydrogenase [NAD(P)+] of Rickettsia africae (strain ESF-5).